The primary structure comprises 207 residues: MAKYIGPKCKLARREKTDLFLKSGVRSIDTKCKLEQPPGQHGQRRGGRMSDYGLQLREKQKVRRMYGIMERQFRNYYKEAARRKAATGTALLQLLESRLDNVCYRMGFGSTRAEARQLVNHRGVLVNGRVVNIPSYQVQPGDTVSVKEKAKSQLRIQAALELAQQNGWASWVDVDATKMEGVFKQAPDRADLSQEINESLIVELYSK.

Positions 97–159 (SRLDNVCYRM…AKSQLRIQAA (63 aa)) constitute an S4 RNA-binding domain.

The protein belongs to the universal ribosomal protein uS4 family. As to quaternary structure, part of the 30S ribosomal subunit. Contacts protein S5. The interaction surface between S4 and S5 is involved in control of translational fidelity.

Its function is as follows. One of the primary rRNA binding proteins, it binds directly to 16S rRNA where it nucleates assembly of the body of the 30S subunit. Functionally, with S5 and S12 plays an important role in translational accuracy. The protein is Small ribosomal subunit protein uS4 of Halorhodospira halophila (strain DSM 244 / SL1) (Ectothiorhodospira halophila (strain DSM 244 / SL1)).